The following is a 631-amino-acid chain: E3 ubiquitin-protein ligase Zswim2 (631 aa).

The SWIM-type zinc finger occupies 54–87 (FRVLLGNPHECSCPTFLKRGELCKHICWVLLKKF). The segment at 139 to 348 (KDINAGDICP…APGYQCRLCL (210 aa)) is UBE2D1-binding. The segment at 147–199 (CPICQEVLLEKKLPVTFCRFGCGNNVHIKCMRILANYQDTGSDSSVLRCPLCR) adopts an RING-type 1 zinc-finger fold. Residues 230–281 (HLGIPCNNCNQLPIEGRCYKCTECVEYHLCQECFDSCCHSSHAFASREKRNQ) form a ZZ-type zinc finger. Zn(2+)-binding residues include cysteine 235, cysteine 238, cysteine 250, cysteine 253, cysteine 259, cysteine 262, histidine 268, and histidine 271. Residues 344–386 (CRLCLKSFSFGQYTRLLPCTHKFHRKCIDNWLLHKCNSCPIDR) form an RING-type 2 zinc finger. The segment at 589 to 614 (SKRQNNSMGKVRQKLGHPPRRPAYPP) is disordered. A compositionally biased stretch (basic residues) spans 599 to 608 (VRQKLGHPPR).

As to quaternary structure, dimer. Interacts with UBE2D1. Post-translationally, polyubiquitinated. Polyubiquitination is followed by degradation via the proteasome. In terms of tissue distribution, expressed only in testis.

The enzyme catalyses S-ubiquitinyl-[E2 ubiquitin-conjugating enzyme]-L-cysteine + [acceptor protein]-L-lysine = [E2 ubiquitin-conjugating enzyme]-L-cysteine + N(6)-ubiquitinyl-[acceptor protein]-L-lysine.. In terms of biological role, E3 ubiquitin-protein ligase involved in the regulation of Fas-, DR3- and DR4-mediated apoptosis. Functions in conjunction with the UBE2D1, UBE2D3 and UBE2E1 E2 ubiquitin-conjugating enzymes. The protein is E3 ubiquitin-protein ligase Zswim2 (Zswim2) of Mus musculus (Mouse).